The sequence spans 72 residues: uncharacterized protein (72 aa).

This is an uncharacterized protein from Schizosaccharomyces pombe (strain 972 / ATCC 24843) (Fission yeast).